The chain runs to 2116 residues: MNPIHDRTSDYHKYLKVKQGDSDLFKLTVSDKRYIWYNPDPKERDSYECGEIVSETSDSFTFKTVDGQDRQVKKDDANQRNPIKFDGVEDMSELSYLNEPAVFHNLRVRYNQDLIYTYSGLFLVAVNPFKRIPIYTQEMVDIFKGRRRNEVAPHIFAISDVAYRSMLDDRQNQSLLITGESGAGKTENTKKVIQYLASVAGRNQANGSGVLEQQILQANPILEAFGNAKTTRNNNSSRFGKFIEIQFNSAGFISGASIQSYLLEKSRVVFQSETERNYHIFYQLLAGATAEEKKALHLAGPESFNYLNQSGCVDIKGVSDSEEFKITRQAMDIVGFSQEEQMSIFKIIAGILHLGNIKFEKGAGEGAVLKDKTALNAASTVFGVNPSVLEKALMEPRILAGRDLVAQHLNVEKSSSSRDALVKALYGRLFLWLVKKINNVLCQERKAYFIGVLDISGFEIFKVNSFEQLCINYTNEKLQQFFNHHMFKLEQEEYLKEKINWTFIDFGLDSQATIDLIDGRQPPGILALLDEQSVFPNATDNTLITKLHSHFSKKNAKYEEPRFSKTEFGVTHYAGQVMYEIQDWLEKNKDPLQQDLELCFKDSSDNVVTKLFNDPNIASRAKKGANFITVAAQYKEQLASLMATLETTNPHFVRCIIPNNKQLPAKLEDKVVLDQLRCNGVLEGIRITRKGFPNRIIYADFVKRYYLLAPNVPRDAEDSQKATDAVLKHLNIDPEQYRFGITKIFFRAGQLARIEEAREQRISEIIKAIQAATRGWIARKVYKQAREHTVAARIIQQNLRAYIDFKSWPWWKLFSKARPLLKRRNFEKEIKEKEREILELKSNLTDSTTQKDKLEKSLKDTESNVLDLQRQLKAEKETLKAMYDSKDALEAQKRELEIRVEDMESELDEKKLALENLQNQKRSVEEKVRDLEEELQEEQKLRNTLEKLKKKYEEELEEMKRVNDGQSDTISRLEKIKDELQKEVEELTESFSEESKDKGVLEKTRVRLQSELDDLTVRLDSETKDKSELLRQKKKLEEELKQVQEALAAETAAKLAQEAANKKLQGEYTELNEKFNSEVTARSNVEKSKKTLESQLVAVNNELDEEKKNRDALEKKKKALDAMLEEMKDQLESTGGEKKSLYDLKVKQESDMEALRNQISELQSTIAKLEKIKSTLEGEVARLQGELEAEQLAKSNVEKQKKKVELDLEDKSAQLAEETAAKQALDKLKKKLEQELSEVQTQLSEANNKNVNSDSTNKHLETSFNNLKLELEAEQKAKQALEKKRLGLESELKHVNEQLEEEKKQKESNEKRKVDLEKEVSELKDQIEEEVASKKAVTEAKNKKESELDEIKRQYADVVSSRDKSVEQLKTLQAKNEELRNTAEEAEGQLDRAERSKKKAEFDLEEAVKNLEEETAKKVKAEKAMKKAETDYRSTKSELDDAKNVSSEQYVQIKRLNEELSELRSVLEEADERCNSAIKAKKTAESALESLKDEIDAANNAKAKAERKSKELEVRVAELEESLEDKSGTVNVEFIRKKDAEIDDLRARLDRETESRIKSDEDKKNTRKQFADLEAKVEEAQREVVTIDRLKKKLESDIIDLSTQLDTETKSRIKIEKSKKKLEQTLAERRAAEEGSSKAADEEIRKQVWQEVDELRAQLDSERAALNASEKKIKSLVAEVDEVKEQLEDEILAKDKLVKAKRALEVELEEVRDQLEEEEDSRSELEDSKRRLTTEVEDIKKKYDAEVEQNTKLDEAKKKLTDDVDTLKKQLEDEKKKLNESERAKKRLESENEDFLAKLDAEVKNRSRAEKDRKKYEKDLKDTKYKLNDEAATKTQTEIGAAKLEDQIDELRSKLEQEQAKATQADKSKKTLEGEIDNLRAQIEDEGKIKMRLEKEKRALEGELEELRETVEEAEDSKSEAEQSKRLVELELEDARRNLQKEIDAKEIAEDAKSNLQREIVEAKGRLEEESIARTNSDRSRKRLEAEIDALTAQVDAEQKAKNQQIKENKKIETELKEYRKKFGESEKTKTKEFLVVEKLETDYKRAKKEAADEQQQRLTVENDLRKHLSEISLLKDAIDKLQRDHDKTKRELETETASKIEMQRKMADFFGGFKA.

One can recognise a Myosin N-terminal SH3-like domain in the interval 30–82 (SDKRYIWYNPDPKERDSYECGEIVSETSDSFTFKTVDGQDRQVKKDDANQRNP). The 674-residue stretch at 86-759 (DGVEDMSELS…QLARIEEARE (674 aa)) folds into the Myosin motor domain. An N6,N6-dimethyllysine modification is found at Lys-130. 179–186 (GESGAGKT) contacts ATP. 2 actin-binding regions span residues 638–660 (LASL…IPNN) and 738–752 (RFGI…GQLA). One can recognise an IQ domain in the interval 762-791 (ISEIIKAIQAATRGWIARKVYKQAREHTVA). Positions 817 to 2116 (ARPLLKRRNF…MADFFGGFKA (1300 aa)) form a coiled coil. Disordered stretches follow at residues 1295 to 1314 (VNEQ…KRKV), 1363 to 1399 (DKSV…SKKK), 1415 to 1444 (TAKK…DAKN), 1711 to 1731 (VRDQ…SKRR), 1771 to 1791 (LEDE…LESE), and 1805 to 1844 (NRSR…AAKL). Basic and acidic residues-rich tracts occupy residues 1375 to 1399 (KNEE…SKKK), 1415 to 1443 (TAKK…DDAK), and 1722 to 1731 (RSELEDSKRR). The segment covering 1805–1832 (NRSRAEKDRKKYEKDLKDTKYKLNDEAA) has biased composition (basic and acidic residues). Phosphothreonine; by MHCK is present on residues Thr-1823, Thr-1833, and Thr-2029.

This sequence belongs to the TRAFAC class myosin-kinesin ATPase superfamily. Myosin family. Myosin-2 heavy chain is two-headed. It self-assembles into filaments. Hexamer of 2 heavy chain subunits (MHC), 2 alkali light chain subunits (MLC) and 2 regulatory light chain subunits (MLC-2). Associates with elmoA. In terms of processing, phosphorylation inhibits thick filament formation and reduces the actin-activated ATPase activity.

It localises to the cytoplasm. It is found in the cell cortex. Its function is as follows. Myosin is a protein that binds to actin and has ATPase activity that is activated by actin. The polypeptide is Myosin-2 heavy chain (mhcA) (Dictyostelium discoideum (Social amoeba)).